A 586-amino-acid chain; its full sequence is Glutamine--tRNA ligase (586 aa).

The 'HIGH' region motif lies at 58-68; that stretch reads PEPNGYLHIGH. ATP is bound by residues 59-61 and 65-71; these read EPN and HIGHAKS. D91 and Y240 together coordinate L-glutamine. ATP is bound by residues T259 and 294–295; that span reads RL. The short motif at 301 to 305 is the 'KMSKS' region element; the sequence is VTSKR.

This sequence belongs to the class-I aminoacyl-tRNA synthetase family. As to quaternary structure, monomer.

The protein localises to the cytoplasm. It catalyses the reaction tRNA(Gln) + L-glutamine + ATP = L-glutaminyl-tRNA(Gln) + AMP + diphosphate. The chain is Glutamine--tRNA ligase from Bordetella avium (strain 197N).